We begin with the raw amino-acid sequence, 249 residues long: Major phosphate-irrepressible acid phosphatase (249 aa).

An N-terminal signal peptide occupies residues 1–20 (MKKNIIAGCLFSLFSLSALA).

Belongs to the class A bacterial acid phosphatase family. In terms of assembly, homotetramer.

The protein resides in the periplasm. The catalysed reaction is a phosphate monoester + H2O = an alcohol + phosphate. This is Major phosphate-irrepressible acid phosphatase (phoC) from Morganella morganii (Proteus morganii).